Here is a 94-residue protein sequence, read N- to C-terminus: Integration host factor subunit beta (94 aa).

It belongs to the bacterial histone-like protein family. In terms of assembly, heterodimer of an alpha and a beta chain.

This protein is one of the two subunits of integration host factor, a specific DNA-binding protein that functions in genetic recombination as well as in transcriptional and translational control. The polypeptide is Integration host factor subunit beta (Mesorhizobium japonicum (strain LMG 29417 / CECT 9101 / MAFF 303099) (Mesorhizobium loti (strain MAFF 303099))).